The following is a 297-amino-acid chain: Large ribosomal subunit protein uL10 (297 aa).

It belongs to the universal ribosomal protein uL10 family. In terms of assembly, part of the 50S ribosomal subunit. Forms part of the ribosomal stalk which helps the ribosome interact with GTP-bound translation factors. Forms a heptameric L10(L12)2(L12)2(L12)2 complex, where L10 forms an elongated spine to which the L12 dimers bind in a sequential fashion.

In terms of biological role, forms part of the ribosomal stalk, playing a central role in the interaction of the ribosome with GTP-bound translation factors. In Methanococcus voltae, this protein is Large ribosomal subunit protein uL10.